Reading from the N-terminus, the 157-residue chain is 2-C-methyl-D-erythritol 2,4-cyclodiphosphate synthase (157 aa).

Residues Asp-9 and His-11 each contribute to the a divalent metal cation site. Residues 9-11 and 35-36 each bind 4-CDP-2-C-methyl-D-erythritol 2-phosphate; these read DVH and HS. His-43 is an a divalent metal cation binding site. 4-CDP-2-C-methyl-D-erythritol 2-phosphate contacts are provided by residues 57–59, 62–66, 101–107, 133–136, Phe-140, and Arg-143; these read DIG, FPDTD, AEKPKMA, and TTTE.

This sequence belongs to the IspF family. In terms of assembly, homotrimer. Requires a divalent metal cation as cofactor.

The enzyme catalyses 4-CDP-2-C-methyl-D-erythritol 2-phosphate = 2-C-methyl-D-erythritol 2,4-cyclic diphosphate + CMP. The protein operates within isoprenoid biosynthesis; isopentenyl diphosphate biosynthesis via DXP pathway; isopentenyl diphosphate from 1-deoxy-D-xylulose 5-phosphate: step 4/6. In terms of biological role, involved in the biosynthesis of isopentenyl diphosphate (IPP) and dimethylallyl diphosphate (DMAPP), two major building blocks of isoprenoid compounds. Catalyzes the conversion of 4-diphosphocytidyl-2-C-methyl-D-erythritol 2-phosphate (CDP-ME2P) to 2-C-methyl-D-erythritol 2,4-cyclodiphosphate (ME-CPP) with a corresponding release of cytidine 5-monophosphate (CMP). The polypeptide is 2-C-methyl-D-erythritol 2,4-cyclodiphosphate synthase (Listeria monocytogenes serovar 1/2a (strain ATCC BAA-679 / EGD-e)).